Consider the following 289-residue polypeptide: Glycine--tRNA ligase alpha subunit (289 aa).

This sequence belongs to the class-II aminoacyl-tRNA synthetase family. Tetramer of two alpha and two beta subunits.

It is found in the cytoplasm. The enzyme catalyses tRNA(Gly) + glycine + ATP = glycyl-tRNA(Gly) + AMP + diphosphate. This is Glycine--tRNA ligase alpha subunit (glyQ) from Rickettsia prowazekii (strain Madrid E).